The following is a 291-amino-acid chain: Small ribosomal subunit biogenesis GTPase RsgA 2 (291 aa).

Residues 63-221 (ENALVRPPVA…VADTPGFSSI (159 aa)) form the CP-type G domain. GTP-binding positions include 112 to 115 (SKMD) and 164 to 172 (GQSGVGKST). The Zn(2+) site is built by C245, C250, H252, and C258.

This sequence belongs to the TRAFAC class YlqF/YawG GTPase family. RsgA subfamily. Monomer. Associates with 30S ribosomal subunit, binds 16S rRNA. Zn(2+) is required as a cofactor.

The protein resides in the cytoplasm. One of several proteins that assist in the late maturation steps of the functional core of the 30S ribosomal subunit. Helps release RbfA from mature subunits. May play a role in the assembly of ribosomal proteins into the subunit. Circularly permuted GTPase that catalyzes slow GTP hydrolysis, GTPase activity is stimulated by the 30S ribosomal subunit. The polypeptide is Small ribosomal subunit biogenesis GTPase RsgA 2 (Listeria monocytogenes serovar 1/2a (strain ATCC BAA-679 / EGD-e)).